Here is a 571-residue protein sequence, read N- to C-terminus: Serine/threonine-protein kinase Nek7 (571 aa).

Residues 19–277 (YHVVEQVRRG…LRNPSLQPYL (259 aa)) form the Protein kinase domain. Residues 25–33 (VRRGKSSSD) and lysine 48 contribute to the ATP site. Aspartate 144 (proton acceptor) is an active-site residue. 2 disordered regions span residues 298-321 (SPKDKARRNSLPGKFGKERVSREK) and 338-363 (TETGSSSSSQPASSTNGAEDKLETKR). The segment covering 312–321 (FGKERVSREK) has biased composition (basic and acidic residues). Low complexity predominate over residues 342–351 (SSSSSQPASS).

Belongs to the protein kinase superfamily. NEK Ser/Thr protein kinase family. NIMA subfamily.

It carries out the reaction L-seryl-[protein] + ATP = O-phospho-L-seryl-[protein] + ADP + H(+). The catalysed reaction is L-threonyl-[protein] + ATP = O-phospho-L-threonyl-[protein] + ADP + H(+). Functionally, may be involved in plant development processes. In Arabidopsis thaliana (Mouse-ear cress), this protein is Serine/threonine-protein kinase Nek7 (NEK7).